The primary structure comprises 1578 residues: Mediator of RNA polymerase II transcription subunit 14 (1578 aa).

The LXXLL motif 1 motif lies at 49-53 (LAELL). The disordered stretch occupies residues 561–582 (SQSVTAGGTSQSSAPSAATTES). Positions 565-580 (TAGGTSQSSAPSAATT) are enriched in low complexity. Positions 739–743 (LKRLL) match the LXXLL motif 2 motif. Disordered regions lie at residues 1009 to 1173 (RRRS…PDHK) and 1510 to 1578 (APGG…GGPN). Residues 1084-1093 (SQSHPNFNMT) are compositionally biased toward polar residues. Pro residues-rich tracts occupy residues 1095–1104 (PPAPHMPHPS) and 1157–1167 (PGMPRPSPRPG). 2 stretches are compositionally biased toward gly residues: residues 1510–1521 (APGGPGGPGPMG) and 1547–1578 (MGGGGQQSNYGGMVGGGAQSGVPGGPGAGGPN).

Belongs to the Mediator complex subunit 14 family. As to quaternary structure, component of the Mediator complex.

Its subcellular location is the nucleus. In terms of biological role, component of the Mediator complex, a coactivator involved in the regulated transcription of nearly all RNA polymerase II-dependent genes. Mediator functions as a bridge to convey information from gene-specific regulatory proteins to the basal RNA polymerase II transcription machinery. Mediator is recruited to promoters by direct interactions with regulatory proteins and serves as a scaffold for the assembly of a functional preinitiation complex with RNA polymerase II and the general transcription factors. The polypeptide is Mediator of RNA polymerase II transcription subunit 14 (MED14) (Aedes aegypti (Yellowfever mosquito)).